Consider the following 198-residue polypeptide: Peptidyl-tRNA hydrolase (198 aa).

Residue Y14 coordinates tRNA. Catalysis depends on H19, which acts as the Proton acceptor. Residues Y64, N66, and N112 each coordinate tRNA.

It belongs to the PTH family. As to quaternary structure, monomer.

It is found in the cytoplasm. The enzyme catalyses an N-acyl-L-alpha-aminoacyl-tRNA + H2O = an N-acyl-L-amino acid + a tRNA + H(+). Hydrolyzes ribosome-free peptidyl-tRNAs (with 1 or more amino acids incorporated), which drop off the ribosome during protein synthesis, or as a result of ribosome stalling. Functionally, catalyzes the release of premature peptidyl moieties from peptidyl-tRNA molecules trapped in stalled 50S ribosomal subunits, and thus maintains levels of free tRNAs and 50S ribosomes. The protein is Peptidyl-tRNA hydrolase of Beijerinckia indica subsp. indica (strain ATCC 9039 / DSM 1715 / NCIMB 8712).